The sequence spans 329 residues: DNA-directed RNA polymerase subunit alpha (329 aa).

The interval 1–235 (MQGSVTEFLK…EQLDAFVDLR (235 aa)) is alpha N-terminal domain (alpha-NTD). Residues 249–329 (FDPILLRPVD…NWPPASIAED (81 aa)) form an alpha C-terminal domain (alpha-CTD) region.

The protein belongs to the RNA polymerase alpha chain family. In terms of assembly, homodimer. The RNAP catalytic core consists of 2 alpha, 1 beta, 1 beta' and 1 omega subunit. When a sigma factor is associated with the core the holoenzyme is formed, which can initiate transcription.

The enzyme catalyses RNA(n) + a ribonucleoside 5'-triphosphate = RNA(n+1) + diphosphate. In terms of biological role, DNA-dependent RNA polymerase catalyzes the transcription of DNA into RNA using the four ribonucleoside triphosphates as substrates. The polypeptide is DNA-directed RNA polymerase subunit alpha (Actinobacillus succinogenes (strain ATCC 55618 / DSM 22257 / CCUG 43843 / 130Z)).